The following is a 308-amino-acid chain: Oxygen-dependent coproporphyrinogen-III oxidase (308 aa).

Ser100 is a binding site for substrate. Residues His104 and His114 each coordinate a divalent metal cation. The active-site Proton donor is His114. Asn116–Arg118 is a binding site for substrate. Residues His153 and His183 each contribute to the a divalent metal cation site. Positions Tyr248–Lys283 are important for dimerization. Substrate is bound at residue Gly266–Arg268.

This sequence belongs to the aerobic coproporphyrinogen-III oxidase family. In terms of assembly, homodimer. A divalent metal cation serves as cofactor.

The protein resides in the cytoplasm. It carries out the reaction coproporphyrinogen III + O2 + 2 H(+) = protoporphyrinogen IX + 2 CO2 + 2 H2O. It functions in the pathway porphyrin-containing compound metabolism; protoporphyrin-IX biosynthesis; protoporphyrinogen-IX from coproporphyrinogen-III (O2 route): step 1/1. Involved in the heme biosynthesis. Catalyzes the aerobic oxidative decarboxylation of propionate groups of rings A and B of coproporphyrinogen-III to yield the vinyl groups in protoporphyrinogen-IX. This is Oxygen-dependent coproporphyrinogen-III oxidase from Francisella tularensis subsp. holarctica (strain OSU18).